Here is a 168-residue protein sequence, read N- to C-terminus: G/U mismatch-specific DNA glycosylase (168 aa).

Belongs to the uracil-DNA glycosylase (UDG) superfamily. TDG/mug family. As to quaternary structure, binds DNA as a monomer.

The protein localises to the cytoplasm. It carries out the reaction Specifically hydrolyzes mismatched double-stranded DNA and polynucleotides, releasing free uracil.. Functionally, excises ethenocytosine and uracil, which can arise by alkylation or deamination of cytosine, respectively, from the corresponding mispairs with guanine in ds-DNA. It is capable of hydrolyzing the carbon-nitrogen bond between the sugar-phosphate backbone of the DNA and the mispaired base. The complementary strand guanine functions in substrate recognition. Required for DNA damage lesion repair in stationary-phase cells. In Klebsiella pneumoniae subsp. pneumoniae (strain ATCC 700721 / MGH 78578), this protein is G/U mismatch-specific DNA glycosylase.